The sequence spans 315 residues: Aspartate carbamoyltransferase catalytic subunit (315 aa).

Residues R64 and T65 each contribute to the carbamoyl phosphate site. Residue K92 participates in L-aspartate binding. Carbamoyl phosphate contacts are provided by R114, H142, and Q145. L-aspartate is bound by residues R176 and R230. Carbamoyl phosphate is bound by residues G271 and P272.

It belongs to the aspartate/ornithine carbamoyltransferase superfamily. ATCase family. In terms of assembly, heterododecamer (2C3:3R2) of six catalytic PyrB chains organized as two trimers (C3), and six regulatory PyrI chains organized as three dimers (R2).

The enzyme catalyses carbamoyl phosphate + L-aspartate = N-carbamoyl-L-aspartate + phosphate + H(+). It participates in pyrimidine metabolism; UMP biosynthesis via de novo pathway; (S)-dihydroorotate from bicarbonate: step 2/3. Its function is as follows. Catalyzes the condensation of carbamoyl phosphate and aspartate to form carbamoyl aspartate and inorganic phosphate, the committed step in the de novo pyrimidine nucleotide biosynthesis pathway. The chain is Aspartate carbamoyltransferase catalytic subunit from Lawsonia intracellularis (strain PHE/MN1-00).